Here is a 140-residue protein sequence, read N- to C-terminus: Midkine (140 aa).

The first 20 residues, 1–20 (MQHRSFFLLALVALLAVTTA), serve as a signal peptide directing secretion. Disulfide bonds link C34–C58, C42–C67, C49–C71, C81–C113, and C91–C123.

Belongs to the pleiotrophin family. Homodimer. Interacts with ALK. Interacts with LRP1; promotes neuronal survival. Interacts with LRP2. Interacts with NCAM1. Interacts (via C-terminal) with PTPRZ1 (via chondroitin sulfate chains); this interaction is inhibited by PTN; this interaction promotes neuronal migration. Interacts with NCL; this interaction promotes NCL clustering and lateral movements of this complex into lipid rafts leading to MDK internalization. Interacts with LRP6 and LRP8: this interaction is calcium dependent. Interacts with ITGA4. Interacts with ITGA6. Interacts with ITGB1. Interacts with ITGA4:ITGB1 complex; this interaction mediates MDK-induced osteoblast cells migration through PXN phosphorylation. Interacts with ITGA6:ITGB1 complex; this interaction mediates MDK-induced neurite outgrowth. Interacts with NOTCH2; this interactio mediates a nuclear accumulation of NOTCH2 and therefore activation of NOTCH2 signaling leading to interaction between HES1 and STAT3. Interacts with GPC2 (via heparan sulfate chain); this interaction is inhibited by heparin followed by chondroitin sulfate E; this interaction induces GPC2 clustering through heparan sulfate chain; this interaction induces neuronal cell adhesion and neurite outgrowth. Interacts with SDC3; this interaction induces SDC3 clustering; this interaction induces neuronal cell adhesion and neurite outgrowth. Interacts with SDC1. Interacts with CSPG5; this interaction promotes elongation of oligodendroglial precursor-like cells. Expressed at a low level in arteries, and at higher levels in newly formed neointima. In brain, expressed in the caudate nucleus and the brain stem.

It is found in the secreted. Functionally, developmentally regulated, secreted growth factor homologous to pleiotrophin (PTN), which has heparin binding activity. Binds anaplastic lymphoma kinase (ALK) which induces ALK activation and subsequent phosphorylation of the insulin receptor substrate (IRS1), followed by the activation of mitogen-activated protein kinase (MAPK) and PI3-kinase, and the induction of cell proliferation. Involved in neointima formation after arterial injury, possibly by mediating leukocyte recruitment. Also involved in early fetal adrenal gland development. Its function is as follows. Secreted protein that functions as a cytokine and growth factor and mediates its signal through cell-surface proteoglycan and non-proteoglycan receptors. Binds cell-surface proteoglycan receptors via their chondroitin sulfate (CS) groups. Thereby regulates many processes like inflammatory response, cell proliferation, cell adhesion, cell growth, cell survival, tissue regeneration, cell differentiation and cell migration. Participates in inflammatory processes by exerting two different activities. Firstly, mediates neutrophils and macrophages recruitment to the sites of inflammation both by direct action by cooperating namely with ITGB2 via LRP1 and by inducing chemokine expression. This inflammation can be accompanied by epithelial cell survival and smooth muscle cell migration after renal and vessel damage, respectively. Secondly, suppresses the development of tolerogenic dendric cells thereby inhibiting the differentiation of regulatory T cells and also promote T cell expansion through NFAT signaling and Th1 cell differentiation. Promotes tissue regeneration after injury or trauma. After heart damage negatively regulates the recruitment of inflammatory cells and mediates cell survival through activation of anti-apoptotic signaling pathways via MAPKs and AKT pathways through the activation of angiogenesis. Also facilitates liver regeneration as well as bone repair by recruiting macrophage at trauma site and by promoting cartilage development by facilitating chondrocyte differentiation. Plays a role in brain by promoting neural precursor cells survival and growth through interaction with heparan sulfate proteoglycans. Binds PTPRZ1 and promotes neuronal migration and embryonic neurons survival. Binds SDC3 or GPC2 and mediates neurite outgrowth and cell adhesion. Binds chondroitin sulfate E and heparin leading to inhibition of neuronal cell adhesion induced by binding with GPC2. Binds CSPG5 and promotes elongation of oligodendroglial precursor-like cells. Also binds ITGA6:ITGB1 complex; this interaction mediates MDK-induced neurite outgrowth. Binds LRP1; promotes neuronal survival. Binds ITGA4:ITGB1 complex; this interaction mediates MDK-induced osteoblast cells migration through PXN phosphorylation. Binds anaplastic lymphoma kinase (ALK) which induces ALK activation and subsequent phosphorylation of the insulin receptor substrate (IRS1), followed by the activation of mitogen-activated protein kinase (MAPK) and PI3-kinase, and the induction of cell proliferation. Promotes epithelial to mesenchymal transition through interaction with NOTCH2. During arteriogenesis, plays a role in vascular endothelial cell proliferation by inducing VEGFA expression and release which in turn induces nitric oxide synthase expression. Moreover activates vasodilation through nitric oxide synthase activation. Negatively regulates bone formation in response to mechanical load by inhibiting Wnt/beta-catenin signaling in osteoblasts. In addition plays a role in hippocampal development, working memory, auditory response, early fetal adrenal gland development and the female reproductive system. In Rattus norvegicus (Rat), this protein is Midkine.